The sequence spans 375 residues: Erythronate-4-phosphate dehydrogenase (375 aa).

Substrate-binding residues include Ser-45 and Thr-66. Residues Asp-146 and Thr-175 each contribute to the NAD(+) site. The active site involves Arg-208. Asp-232 is an NAD(+) binding site. The active site involves Glu-237. Catalysis depends on His-254, which acts as the Proton donor. Position 257 (Gly-257) interacts with NAD(+). Tyr-258 is a substrate binding site.

The protein belongs to the D-isomer specific 2-hydroxyacid dehydrogenase family. PdxB subfamily. In terms of assembly, homodimer.

The protein resides in the cytoplasm. It carries out the reaction 4-phospho-D-erythronate + NAD(+) = (R)-3-hydroxy-2-oxo-4-phosphooxybutanoate + NADH + H(+). It functions in the pathway cofactor biosynthesis; pyridoxine 5'-phosphate biosynthesis; pyridoxine 5'-phosphate from D-erythrose 4-phosphate: step 2/5. Its function is as follows. Catalyzes the oxidation of erythronate-4-phosphate to 3-hydroxy-2-oxo-4-phosphonooxybutanoate. The chain is Erythronate-4-phosphate dehydrogenase from Yersinia enterocolitica serotype O:8 / biotype 1B (strain NCTC 13174 / 8081).